A 120-amino-acid chain; its full sequence is UPF0342 protein Csac_0863 (120 aa).

The protein belongs to the UPF0342 family.

In Caldicellulosiruptor saccharolyticus (strain ATCC 43494 / DSM 8903 / Tp8T 6331), this protein is UPF0342 protein Csac_0863.